The sequence spans 198 residues: Beta-crystallin A1 (198 aa).

Positions 1–13 (MAQINPLPVPLGP) are N-terminal arm. Beta/gamma crystallin 'Greek key' domains follow at residues 14–53 (WKIT…KVEC) and 54–100 (GGWI…RPIC). The connecting peptide stretch occupies residues 101 to 106 (SANHKE). Beta/gamma crystallin 'Greek key' domains lie at 107 to 148 (SKLV…KVQC) and 149 to 197 (GSWV…RRIQ).

The protein belongs to the beta/gamma-crystallin family. As to quaternary structure, homo/heterodimer, or complexes of higher-order. The structure of beta-crystallin oligomers seems to be stabilized through interactions between the N-terminal arms.

In terms of biological role, crystallins are the dominant structural components of the vertebrate eye lens. This chain is Beta-crystallin A1, found in Rana temporaria (European common frog).